Here is a 293-residue protein sequence, read N- to C-terminus: F-box only protein 6 (293 aa).

The region spanning 10-57 is the F-box domain; sequence LDSINELPENILLELFTHVPARQLLLNCRLVCSLWRDLIDLMTLWKRK. Positions 78–259 constitute an FBA domain; sequence FYFLRSLHRN…VTNSSIVVSP (182 aa). Phosphoserine is present on S258. A compositionally biased stretch (polar residues) spans 261 to 271; it reads MTRNQASSEAQ. A disordered region spans residues 261 to 285; the sequence is MTRNQASSEAQPGQKHGQEEAAQSP. Phosphoserine is present on S284.

Interacts with VCP. Part of a SCF (SKP1-cullin-F-box) protein ligase complex. Interacts with CHEK1 and CUL1.

It is found in the cytoplasm. It functions in the pathway protein modification; protein ubiquitination. Functionally, substrate-recognition component of some SCF (SKP1-CUL1-F-box protein)-type E3 ubiquitin ligase complexes. Involved in endoplasmic reticulum-associated degradation pathway (ERAD) for misfolded lumenal proteins by recognizing and binding sugar chains on unfolded glycoproteins that are retrotranslocated into the cytosol and promoting their ubiquitination and subsequent degradation. Able to recognize and bind denatured glycoproteins, which are modified with not only high-mannose but also complex-type oligosaccharides. Also recognizes sulfated glycans. Also involved in DNA damage response by specifically recognizing activated CHEK1 (phosphorylated on 'Ser-345'), promoting its ubiquitination and degradation. Ubiquitination of CHEK1 is required to ensure that activated CHEK1 does not accumulate as cells progress through S phase, or when replication forks encounter transient impediments during normal DNA replication. This is F-box only protein 6 (FBXO6) from Homo sapiens (Human).